The following is a 465-amino-acid chain: Methionine aminopeptidase 2-2 (465 aa).

The span at 1-13 (MGSKTPNDHRRGP) shows a compositional bias: basic and acidic residues. A disordered region spans residues 1–92 (MGSKTPNDHR…KKKTLLGGLQ (92 aa)). A compositionally biased stretch (acidic residues) spans 44 to 55 (GETEDGEDEDDD). Over residues 71–86 (TKKKNKRKKNKKKKKT) the composition is skewed to basic residues. His-217 is a binding site for substrate. 3 residues coordinate a divalent metal cation: Asp-238, Asp-249, and His-318. His-326 contacts substrate. A divalent metal cation contacts are provided by Glu-351 and Glu-446.

Belongs to the peptidase M24A family. Methionine aminopeptidase eukaryotic type 2 subfamily. Co(2+) serves as cofactor. Zn(2+) is required as a cofactor. Requires Mn(2+) as cofactor. The cofactor is Fe(2+).

Its subcellular location is the cytoplasm. It carries out the reaction Release of N-terminal amino acids, preferentially methionine, from peptides and arylamides.. Functionally, cotranslationally removes the N-terminal methionine from nascent proteins. The N-terminal methionine is often cleaved when the second residue in the primary sequence is small and uncharged (Met-Ala-, Cys, Gly, Pro, Ser, Thr, or Val). In Ajellomyces dermatitidis (strain ER-3 / ATCC MYA-2586) (Blastomyces dermatitidis), this protein is Methionine aminopeptidase 2-2.